The primary structure comprises 360 residues: Protein NDRG2 (360 aa).

The disordered stretch occupies residues 325-360 (RTASLSSEGNRSRSRTLSQSSESGGGPPAPLAEVTC).

The protein belongs to the NDRG family.

The protein localises to the cytoplasm. Its function is as follows. Contributes to the regulation of the Wnt signaling pathway. Down-regulates CTNNB1-mediated transcriptional activation of target genes. May be involved in neuron differentiation. The protein is Protein NDRG2 of Xenopus tropicalis (Western clawed frog).